Here is a 387-residue protein sequence, read N- to C-terminus: 3-ketoacyl-CoA thiolase (387 aa).

C91 serves as the catalytic Acyl-thioester intermediate. Residues H343 and C373 each act as proton acceptor in the active site.

Belongs to the thiolase-like superfamily. Thiolase family. In terms of assembly, heterotetramer of two alpha chains (FadB) and two beta chains (FadA).

It is found in the cytoplasm. It catalyses the reaction an acyl-CoA + acetyl-CoA = a 3-oxoacyl-CoA + CoA. It participates in lipid metabolism; fatty acid beta-oxidation. Its function is as follows. Catalyzes the final step of fatty acid oxidation in which acetyl-CoA is released and the CoA ester of a fatty acid two carbons shorter is formed. This Shewanella sp. (strain W3-18-1) protein is 3-ketoacyl-CoA thiolase.